The chain runs to 122 residues: Large ribosomal subunit protein uL14 (122 aa).

It belongs to the universal ribosomal protein uL14 family. As to quaternary structure, part of the 50S ribosomal subunit. Forms a cluster with proteins L3 and L19. In the 70S ribosome, L14 and L19 interact and together make contacts with the 16S rRNA in bridges B5 and B8.

Binds to 23S rRNA. Forms part of two intersubunit bridges in the 70S ribosome. In Treponema denticola (strain ATCC 35405 / DSM 14222 / CIP 103919 / JCM 8153 / KCTC 15104), this protein is Large ribosomal subunit protein uL14.